A 579-amino-acid chain; its full sequence is Tricyclene synthase 0e23, chloroplastic (579 aa).

The N-terminal 66 residues, 1–66, are a transit peptide targeting the chloroplast; that stretch reads MAFCISYLGA…ALCLNAHSTS (66 aa). Residues Asn27, Asn204, and Asn317 are each glycosylated (N-linked (GlcNAc...) asparagine). Mg(2+)-binding residues include Asp336 and Asp340. The DDXXD motif motif lies at 336 to 340; the sequence is DDIFD. Residues Asn382 and Asn463 are each glycosylated (N-linked (GlcNAc...) asparagine). Residues Asn480 and Glu488 each coordinate Mg(2+). The N-linked (GlcNAc...) asparagine glycan is linked to Asn507.

Belongs to the terpene synthase family. Tpsg subfamily. The cofactor is Mg(2+). It depends on Mn(2+) as a cofactor. In terms of tissue distribution, accumulates in flowers; mostly expressed in both upper and lower petal lobes, and, to a lower extent, in tube and stamens.

Its subcellular location is the plastid. It is found in the chloroplast stroma. It catalyses the reaction (2E)-geranyl diphosphate = tricyclene + diphosphate. The enzyme catalyses (2E)-geranyl diphosphate = (E)-beta-ocimene + diphosphate. The protein operates within secondary metabolite biosynthesis; terpenoid biosynthesis. Contributes to floral scent emission. In Antirrhinum majus (Garden snapdragon), this protein is Tricyclene synthase 0e23, chloroplastic (0e23).